The sequence spans 133 residues: Snaclec echicetin subunit alpha (133 aa).

Cystine bridges form between Cys4/Cys15, Cys31/Cys127, and Cys102/Cys119. In terms of domain architecture, C-type lectin spans 11–128 (YEGHCYQLFR…CEFKFPFVCK (118 aa)).

The protein belongs to the snaclec family. Heterodimer of subunits alpha and beta; disulfide-linked. Forms an active complex with the pentameric immunoglobuline Mkappa (IgMkappa). As to expression, expressed by the venom gland.

It localises to the secreted. Functionally, echicetin itself inhibits aggregation of washed platelets induced by vWF, thrombin or alboaggregin-A. However, when complexed with the pentameric plasma immunoglobulin Mkappa (IgMkappa), echicetin binds specifically to GPIb and activates platelets. This is caused by P-selectin expression and activation of alpha-IIb/beta-3 as well as tyrosine phosphorylation of several signal transduction molecules, including p53/56(LYN), p64, p72(SYK), p70 to p90, and p120. In vivo, it induces thrombocytopenia when injected into mice, probably accounting of activation of platelets rather than inhibition. This is Snaclec echicetin subunit alpha from Echis carinatus sochureki (Saw-scaled viper).